Consider the following 424-residue polypeptide: MLDIKQLRTDFDQIKEKLAHRGEDLADFDKFGELDQKRRELIGKTEVLKSRRNEVSQQVAVLKREKKDADHIIQEMREVGDEIKKLDDELRTVEESLQHILFSIPNIPHDTVPVGETEDDNVEVRKWGEQPAFSFEPKPHWDVADELNILDFERAGKVTGSRFVFYKGLGARLERALYNFMLDLHVDEFGFTEVLPPYMVNRASMTGTGQLPKFEEDAFKIREEDYFLIPTAEVPITNMHRDEIIEGEQLPINYAAFSACFRSEAGSAGRDTRGLIRQHQFNKVELVKFVRPEDSYEELEKLTNQAEKVLQLLNLPYRVMSMCTGDLGFTAAKKYDIEVWIPSQDTYREISSCSNFEAFQARRANIRFRPEPKAKPEHVHTLNGSGLAVGRTVAAILENYQQEDGTVIIPEVLRPYMGNKEVMK.

Residue 231 to 233 (TAE) participates in L-serine binding. 262–264 (RSE) is a binding site for ATP. E285 is a binding site for L-serine. ATP is bound at residue 349–352 (EISS). S385 contacts L-serine.

The protein belongs to the class-II aminoacyl-tRNA synthetase family. Type-1 seryl-tRNA synthetase subfamily. As to quaternary structure, homodimer. The tRNA molecule binds across the dimer.

It is found in the cytoplasm. The enzyme catalyses tRNA(Ser) + L-serine + ATP = L-seryl-tRNA(Ser) + AMP + diphosphate + H(+). The catalysed reaction is tRNA(Sec) + L-serine + ATP = L-seryl-tRNA(Sec) + AMP + diphosphate + H(+). Its pathway is aminoacyl-tRNA biosynthesis; selenocysteinyl-tRNA(Sec) biosynthesis; L-seryl-tRNA(Sec) from L-serine and tRNA(Sec): step 1/1. Its function is as follows. Catalyzes the attachment of serine to tRNA(Ser). Is also able to aminoacylate tRNA(Sec) with serine, to form the misacylated tRNA L-seryl-tRNA(Sec), which will be further converted into selenocysteinyl-tRNA(Sec). The polypeptide is Serine--tRNA ligase (Bacillus pumilus (strain SAFR-032)).